We begin with the raw amino-acid sequence, 233 residues long: Sugar fermentation stimulation protein homolog (233 aa).

It belongs to the SfsA family.

The polypeptide is Sugar fermentation stimulation protein homolog (Chelativorans sp. (strain BNC1)).